The primary structure comprises 165 residues: Large ribosomal subunit protein uL10 (165 aa).

Belongs to the universal ribosomal protein uL10 family. As to quaternary structure, part of the ribosomal stalk of the 50S ribosomal subunit. The N-terminus interacts with L11 and the large rRNA to form the base of the stalk. The C-terminus forms an elongated spine to which L12 dimers bind in a sequential fashion forming a multimeric L10(L12)X complex.

Its function is as follows. Forms part of the ribosomal stalk, playing a central role in the interaction of the ribosome with GTP-bound translation factors. In Shewanella piezotolerans (strain WP3 / JCM 13877), this protein is Large ribosomal subunit protein uL10.